We begin with the raw amino-acid sequence, 707 residues long: Acyl-CoA ligase 891, peroxisomal (707 aa).

I259–K270 is an ATP binding site. The interval D525–K549 is fatty acid-binding. The short motif at A705–L707 is the Peroxisome targeting signal element.

Belongs to the ATP-dependent AMP-binding enzyme family.

Its subcellular location is the peroxisome matrix. The catalysed reaction is (4E,8E)-10-(4-hydroxy-6-methoxy-7-methyl-3-oxo-1,3-dihydro-2-benzofuran-5-yl)-4,8-dimethyldeca-4,8-dienoate + ATP + CoA = (4E,8E)-10-(4-hydroxy-6-methoxy-7-methyl-3-oxo-1,3-dihydro-2-benzofuran-5-yl)-4,8-dimethyldeca-4,8-dienoyl-CoA + AMP + diphosphate. It participates in secondary metabolite biosynthesis; terpenoid biosynthesis. Functionally, acyl-CoA ligase involved in the biosynthesis of mycophenolic acid (MPA), the first isolated antibiotic natural product in the world obtained from a culture of Penicillium brevicompactum in 1893. The peroxisomal acyl-CoA ligase 891 converts the intermediate MFDHMP-3C into MFDHMP-3C-CoA which impairs its diffusion from the peroxisome. The first step of the pathway is the synthesis of 5-methylorsellinic acid (5MOA) by the cytosolic polyketide synthase mpaC. 5MOA is then converted to the phthalide compound 5,7-dihydroxy-4,6-dimethylphthalide (DHMP) by the endoplasmic reticulum-bound cytochrome P450 monooxygenase mpaDE. MpaDE first catalyzes hydroxylation of 5-MOA to 4,6-dihydroxy-2-(hydroxymethyl)-3-methylbenzoic acid (DHMB). MpaDE then acts as a lactone synthase that catalyzes the ring closure to convert DHMB into DHMP. The next step is the prenylation of DHMP by the Golgi apparatus-associated prenyltransferase mpaA to yield farnesyl-DHMP (FDHMP). The ER-bound oxygenase mpaB then mediates the oxidative cleavage the C19-C20 double bond in FDHMP to yield FDHMP-3C via a mycophenolic aldehyde intermediate. The O-methyltransferase mpaG catalyzes the methylation of FDHMP-3C to yield MFDHMP-3C. After the cytosolic methylation of FDHMP-3C, MFDHMP-3C enters into peroxisomes probably via free diffusion due to its low molecular weight. Upon a peroxisomal CoA ligation reaction, catalyzed by a beta-oxidation component enzyme acyl-CoA ligase ACL891, MFDHMP-3C-CoA would then be restricted to peroxisomes for the following beta-oxidation pathway steps. The peroxisomal beta-oxidation machinery than converts MFDHMP-3C-CoA into MPA_CoA, via a beta-oxidation chain-shortening process. Finally mpaH acts as a peroxisomal acyl-CoA hydrolase with high substrate specificity toward MPA-CoA to release the final product MPA. This is Acyl-CoA ligase 891, peroxisomal from Penicillium brevicompactum.